Here is a 465-residue protein sequence, read N- to C-terminus: Hydroxyacid-oxoacid transhydrogenase, mitochondrial (465 aa).

Lysine 443 is subject to N6-acetyllysine. A Phosphoserine modification is found at serine 450.

The protein belongs to the iron-containing alcohol dehydrogenase family. Hydroxyacid-oxoacid transhydrogenase subfamily. As to expression, expressed in white and brown adipose tissues, liver, and kidney. Expression is differentiation-dependent during in vitro brown and white adipogenesis.

It localises to the mitochondrion. The catalysed reaction is (S)-3-hydroxybutanoate + 2-oxoglutarate = (R)-2-hydroxyglutarate + acetoacetate. It catalyses the reaction 4-hydroxybutanoate + 2-oxoglutarate = (R)-2-hydroxyglutarate + succinate semialdehyde. Functionally, catalyzes the cofactor-independent reversible oxidation of gamma-hydroxybutyrate (GHB) to succinic semialdehyde (SSA) coupled to reduction of 2-ketoglutarate (2-KG) to D-2-hydroxyglutarate (D-2-HG). L-3-hydroxybutyrate (L-3-OHB) is also a substrate for HOT when using 2-KG as hydrogen acceptor, resulting in the formation of D-2-HG. In Mus musculus (Mouse), this protein is Hydroxyacid-oxoacid transhydrogenase, mitochondrial (Adhfe1).